The chain runs to 234 residues: MHQLVLLRHGESVWNKENLFTGWTDVELSPSGEEESRKAGLLLKEHGFVFDMAFTSLLKRAIKTLWIVLEQMDLMWIPERKEWRLNERHYGALQGLNKAQTAEQYGDEQVKLWRRSYKVRPPALAEGDRRHPSFDPRYHSLQGELLPSTECLQDTVERVLPFWRQQAVPALRQGKRILIAAHGNSLRGLIKYLDQVSDEDIVGLEIPTGSPLVYELDSDLKPMRHYYLETGKTG.

Substrate-binding positions include Arg8–Asn15, Thr21–Gly22, Arg60, Glu87–Tyr90, Lys98, Arg114–Arg115, and Gly183–Asn184. Residue His9 is the Tele-phosphohistidine intermediate of the active site. Glu87 functions as the Proton donor/acceptor in the catalytic mechanism.

The protein belongs to the phosphoglycerate mutase family. BPG-dependent PGAM subfamily. In terms of assembly, homodimer.

The enzyme catalyses (2R)-2-phosphoglycerate = (2R)-3-phosphoglycerate. It functions in the pathway carbohydrate degradation; glycolysis; pyruvate from D-glyceraldehyde 3-phosphate: step 3/5. Functionally, catalyzes the interconversion of 2-phosphoglycerate and 3-phosphoglycerate. The sequence is that of 2,3-bisphosphoglycerate-dependent phosphoglycerate mutase from Geobacter sp. (strain M21).